The sequence spans 1434 residues: Ankyrin and armadillo repeat-containing protein (1434 aa).

A helical transmembrane segment spans residues 309–329 (IRRGIGYLKLICFLIPFLLSL). ANK repeat units lie at residues 532-561 (AGYTIFHHAALHNRVSIICQLCNANFKVNQ), 569-598 (QGPTPLHLAAQACSLETTVCLLCSKADYTL), 602-631 (RGWMPIHFAAFYDNVCIIIALCRKDPSLLE), 638-667 (NQCTPLLLAATSGALDTIQYLFSIGANWRK), and 671-701 (KGNNIIHLSVLTFHTEVLKYIIKLNIPELPV). ARM repeat units lie at residues 732-771 (DQYWRCILDAGTIPALINLLKSSKIKLQCKTVGLLSNIST), 773-812 (KSAVHALVEAGGIPSLINLLVCDEPEVHSRCAVILYDIAQ), 814-852 (ENKDVIAKYNGIPSLINLLNLNIENVLVNVMNCIRVLCI), 855-894 (ENNQRAVREHKGLPYLIRFLSSDSDVLKAVSSAAIAEVGR), 897-936 (KEIQDAIAMEGAIPPLVALFKGKQISVQMKGAMAVESLAS), and 1072-1112 (PVSQ…CIVL).

In terms of tissue distribution, ubiquitously expressed with highest level in pancreas and lowest in skeletal muscle.

It is found in the membrane. The sequence is that of Ankyrin and armadillo repeat-containing protein (ANKAR) from Homo sapiens (Human).